Consider the following 194-residue polypeptide: Protein GrpE (194 aa).

Belongs to the GrpE family. In terms of assembly, homodimer.

Its subcellular location is the cytoplasm. In terms of biological role, participates actively in the response to hyperosmotic and heat shock by preventing the aggregation of stress-denatured proteins, in association with DnaK and GrpE. It is the nucleotide exchange factor for DnaK and may function as a thermosensor. Unfolded proteins bind initially to DnaJ; upon interaction with the DnaJ-bound protein, DnaK hydrolyzes its bound ATP, resulting in the formation of a stable complex. GrpE releases ADP from DnaK; ATP binding to DnaK triggers the release of the substrate protein, thus completing the reaction cycle. Several rounds of ATP-dependent interactions between DnaJ, DnaK and GrpE are required for fully efficient folding. In Aliivibrio fischeri (strain ATCC 700601 / ES114) (Vibrio fischeri), this protein is Protein GrpE.